The following is a 340-amino-acid chain: Entry-fusion complex protein OPG094 (340 aa).

A lipid anchor (N-myristoyl glycine; by host) is attached at Gly2. Topologically, residues 2 to 319 (GGRVSVELPK…VQHNIKHSFD (318 aa)) are virion surface. A helical; Signal-anchor for type II membrane protein membrane pass occupies residues 320 to 340 (LKLHLISLLSLLVIWILIVAI).

This sequence belongs to the orthopoxvirus OPG086 family. In terms of assembly, interacts with OPG143. Component of the entry fusion complex (EFC) composed of OPG053, OPG076, OPG086, OPG094, OPG095, OPG099, OPG107, OPG143, OPG104, OPG147 and OPG155. Except for OPG095 and OPG053, each of the EFC proteins is required for assembly or stability of the complex. Post-translationally, unglycosylated because produced in viral factories instead of the classic ER -Golgi route.

The protein resides in the virion membrane. Component of the entry fusion complex (EFC), which consists of 11 proteins. During cell infection, this complex mediates entry of the virion core into the host cytoplasm by a two-step mechanism consisting of lipid mixing of the viral and cellular membranes and subsequent pore formation. The polypeptide is Entry-fusion complex protein OPG094 (OPG094) (Homo sapiens (Human)).